The chain runs to 822 residues: Ras GTPase-activating-like protein rgaA (822 aa).

Residues 1–36 are disordered; it reads MNKEEYSDISDSESEEVHETNNHNEHEHEEEDDTPE. Residues 15 to 27 show a composition bias toward basic and acidic residues; the sequence is EEVHETNNHNEHE. Positions 104-152 form a coiled coil; that stretch reads EDKESDWIAEIQELKRNLVSEVRRNHTLERDLNRLDKRIALLIKNRGNI. The required for interaction to rac1A stretch occupies residues 161-822; the sequence is GLKAPKHKGD…IHLLNKLFLY (662 aa). Residues 234-477 form the Ras-GAP domain; sequence FLLLSLYRLS…GDIKNYLQEI (244 aa).

Heterotetramer. Quaternary complex with activated rac1A, ctxA and ctxB. Interacts directly with rac1A and ctxA. Preferentially interacts with activated forms of rac1A, rac1B and rac1C. Interacts with racE.

It localises to the cytoplasm. It is found in the cell cortex. The protein localises to the cleavage furrow. Its function is as follows. Part of signaling pathway that is required for completion of cytokinesis. gapA and rgaA control cortexillin localization to the cleavage furrow and hence may be involved in cleavage of the midbody in the final stage of cytokinesis by regulating the actin cytoskeleton. Forms a complex by linking activated rac1A to ctxA. Assembly of this complex is necessary for the recruitment of cortexillin to the midzone of a dividing cell. Overexpression leads to the suppression of the formation of cellular projections containing F-actin and to a defect in cytokinesis. In Dictyostelium discoideum (Social amoeba), this protein is Ras GTPase-activating-like protein rgaA (rgaA).